Here is a 76-residue protein sequence, read N- to C-terminus: Large ribosomal subunit protein bL31 (76 aa).

It belongs to the bacterial ribosomal protein bL31 family. Type A subfamily. As to quaternary structure, part of the 50S ribosomal subunit.

Functionally, binds the 23S rRNA. This Gluconacetobacter diazotrophicus (strain ATCC 49037 / DSM 5601 / CCUG 37298 / CIP 103539 / LMG 7603 / PAl5) protein is Large ribosomal subunit protein bL31.